A 492-amino-acid polypeptide reads, in one-letter code: 2-succinylbenzoate--CoA ligase (492 aa).

The protein belongs to the ATP-dependent AMP-binding enzyme family. MenE subfamily.

It catalyses the reaction 2-succinylbenzoate + ATP + CoA = 2-succinylbenzoyl-CoA + AMP + diphosphate. It functions in the pathway quinol/quinone metabolism; 1,4-dihydroxy-2-naphthoate biosynthesis; 1,4-dihydroxy-2-naphthoate from chorismate: step 5/7. It participates in quinol/quinone metabolism; menaquinone biosynthesis. Functionally, converts 2-succinylbenzoate (OSB) to 2-succinylbenzoyl-CoA (OSB-CoA). This is 2-succinylbenzoate--CoA ligase from Geobacillus sp. (strain WCH70).